The sequence spans 831 residues: DNA ligase (831 aa).

Residues 34–38, 83–84, and glutamate 114 each bind NAD(+); these read DADYD and SL. Lysine 116 serves as the catalytic N6-AMP-lysine intermediate. Arginine 137, glutamate 174, lysine 291, and lysine 315 together coordinate NAD(+). Zn(2+) is bound by residues cysteine 409, cysteine 412, cysteine 427, and cysteine 433. Positions 749 to 831 constitute a BRCT domain; it reads AHTAPLNGQS…LAFLEQYSAQ (83 aa).

It belongs to the NAD-dependent DNA ligase family. LigA subfamily. Mg(2+) serves as cofactor. It depends on Mn(2+) as a cofactor.

The enzyme catalyses NAD(+) + (deoxyribonucleotide)n-3'-hydroxyl + 5'-phospho-(deoxyribonucleotide)m = (deoxyribonucleotide)n+m + AMP + beta-nicotinamide D-nucleotide.. Functionally, DNA ligase that catalyzes the formation of phosphodiester linkages between 5'-phosphoryl and 3'-hydroxyl groups in double-stranded DNA using NAD as a coenzyme and as the energy source for the reaction. It is essential for DNA replication and repair of damaged DNA. In Xylella fastidiosa (strain M23), this protein is DNA ligase.